A 211-amino-acid polypeptide reads, in one-letter code: Orotidine 5'-phosphate decarboxylase (211 aa).

Substrate-binding positions include aspartate 7, lysine 29, 57 to 66 (DLKLADIPNT), serine 109, 162 to 172 (PGIGAQGGSPV), glycine 185, and arginine 186. The active-site Proton donor is lysine 59.

This sequence belongs to the OMP decarboxylase family. Type 1 subfamily. In terms of assembly, homodimer.

It carries out the reaction orotidine 5'-phosphate + H(+) = UMP + CO2. Its pathway is pyrimidine metabolism; UMP biosynthesis via de novo pathway; UMP from orotate: step 2/2. Its function is as follows. Catalyzes the decarboxylation of orotidine 5'-monophosphate (OMP) to uridine 5'-monophosphate (UMP). The chain is Orotidine 5'-phosphate decarboxylase from Pyrococcus furiosus (strain ATCC 43587 / DSM 3638 / JCM 8422 / Vc1).